We begin with the raw amino-acid sequence, 438 residues long: Adenylosuccinate synthetase (438 aa).

Residues 13–19 (GDEGKGK) and 41–43 (GHT) each bind GTP. The active-site Proton acceptor is Asp14. Residues Asp14 and Gly41 each contribute to the Mg(2+) site. IMP-binding positions include 14–17 (DEGK), 39–42 (NAGH), Thr130, Arg144, Gln225, Thr240, and Arg310. His42 (proton donor) is an active-site residue. 306 to 312 (ATTGRLR) is a binding site for substrate. GTP is bound by residues Arg312, 338–340 (KLD), and 421–423 (STG).

The protein belongs to the adenylosuccinate synthetase family. In terms of assembly, homodimer. The cofactor is Mg(2+).

The protein localises to the cytoplasm. It carries out the reaction IMP + L-aspartate + GTP = N(6)-(1,2-dicarboxyethyl)-AMP + GDP + phosphate + 2 H(+). It participates in purine metabolism; AMP biosynthesis via de novo pathway; AMP from IMP: step 1/2. In terms of biological role, plays an important role in the de novo pathway of purine nucleotide biosynthesis. Catalyzes the first committed step in the biosynthesis of AMP from IMP. The protein is Adenylosuccinate synthetase of Vibrio vulnificus (strain YJ016).